The primary structure comprises 187 residues: UPF0340 protein SPG_0604 (187 aa).

Belongs to the UPF0340 family.

The polypeptide is UPF0340 protein SPG_0604 (Streptococcus pneumoniae serotype 19F (strain G54)).